We begin with the raw amino-acid sequence, 498 residues long: Glycerol kinase (498 aa).

Residue Thr12 coordinates ADP. Positions 12, 13, and 14 each coordinate ATP. Thr12 contributes to the sn-glycerol 3-phosphate binding site. Arg16 serves as a coordination point for ADP. 3 residues coordinate sn-glycerol 3-phosphate: Arg82, Glu83, and Tyr134. Glycerol contacts are provided by Arg82, Glu83, and Tyr134. His230 bears the Phosphohistidine; by HPr mark. Residue Asp244 participates in sn-glycerol 3-phosphate binding. Residues Asp244 and Gln245 each contribute to the glycerol site. Residues Thr266, Gly309, Gln313, Gly410, and Asn414 each coordinate ADP. ATP-binding residues include Thr266, Gly309, Gln313, and Gly410.

This sequence belongs to the FGGY kinase family. As to quaternary structure, homotetramer and homodimer (in equilibrium). The phosphoenolpyruvate-dependent sugar phosphotransferase system (PTS), including enzyme I, and histidine-containing protein (HPr) are required for the phosphorylation, which leads to the activation of the enzyme.

It carries out the reaction glycerol + ATP = sn-glycerol 3-phosphate + ADP + H(+). It participates in polyol metabolism; glycerol degradation via glycerol kinase pathway; sn-glycerol 3-phosphate from glycerol: step 1/1. Activated by phosphorylation and inhibited by fructose 1,6-bisphosphate (FBP). In terms of biological role, key enzyme in the regulation of glycerol uptake and metabolism. Catalyzes the phosphorylation of glycerol to yield sn-glycerol 3-phosphate. This chain is Glycerol kinase, found in Staphylococcus aureus (strain COL).